Here is a 221-residue protein sequence, read N- to C-terminus: MISAHVWADAQRLWDFQQMGHEPHPCSVAIGLGSHDLGVAETTAELYHRGMAPVIVFTGATSRTTHERMPRGEAEHYRERAVELGVPERAILVEPNARNTGENIRLSRALLEDLGMPVTSVLLVSKPYEERRAYATARKLWPNVEWVCVSTSMTLPDYVKSIGDARLVIDMLVGAQQRLMVYPRQGFMIKQEIPEPIMTAYEHLRGHGFTSRLVPETAEQT.

A DNA-binding region (H-T-H motif) is located at residues 77–96; the sequence is YRERAVELGVPERAILVEPN.

It to E.coli YdcF.

In terms of biological role, the imp locus inhibits the extrachromosomal maintenance of the streptomyces plasmid SLP1. May function as a transcriptional activator. This is an uncharacterized protein from Streptomyces coelicolor (strain ATCC BAA-471 / A3(2) / M145).